The chain runs to 213 residues: ATP phosphoribosyltransferase (213 aa).

The protein belongs to the ATP phosphoribosyltransferase family. Short subfamily. Heteromultimer composed of HisG and HisZ subunits.

The protein resides in the cytoplasm. The enzyme catalyses 1-(5-phospho-beta-D-ribosyl)-ATP + diphosphate = 5-phospho-alpha-D-ribose 1-diphosphate + ATP. It participates in amino-acid biosynthesis; L-histidine biosynthesis; L-histidine from 5-phospho-alpha-D-ribose 1-diphosphate: step 1/9. Catalyzes the condensation of ATP and 5-phosphoribose 1-diphosphate to form N'-(5'-phosphoribosyl)-ATP (PR-ATP). Has a crucial role in the pathway because the rate of histidine biosynthesis seems to be controlled primarily by regulation of HisG enzymatic activity. This Bacillus licheniformis (strain ATCC 14580 / DSM 13 / JCM 2505 / CCUG 7422 / NBRC 12200 / NCIMB 9375 / NCTC 10341 / NRRL NRS-1264 / Gibson 46) protein is ATP phosphoribosyltransferase.